The primary structure comprises 239 residues: Ribose-5-phosphate isomerase A (239 aa).

Residues 31-34 (FGST), 88-91 (DGAD), and 101-104 (KGGG) each bind substrate. Catalysis depends on Glu110, which acts as the Proton acceptor. Lys128 serves as a coordination point for substrate.

It belongs to the ribose 5-phosphate isomerase family. In terms of assembly, homodimer.

It carries out the reaction aldehydo-D-ribose 5-phosphate = D-ribulose 5-phosphate. The protein operates within carbohydrate degradation; pentose phosphate pathway; D-ribose 5-phosphate from D-ribulose 5-phosphate (non-oxidative stage): step 1/1. Its function is as follows. Catalyzes the reversible conversion of ribose-5-phosphate to ribulose 5-phosphate. This is Ribose-5-phosphate isomerase A from Chloroflexus aurantiacus (strain ATCC 29366 / DSM 635 / J-10-fl).